Reading from the N-terminus, the 456-residue chain is Short chain dehydrogenase tazN (456 aa).

The NADP(+) site is built by V45, D99, N126, R160, Y195, K199, and T229. The Proton donor role is filled by Y195. Catalysis depends on K199, which acts as the Lowers pKa of active site Tyr.

It belongs to the short-chain dehydrogenases/reductases (SDR) family.

It functions in the pathway secondary metabolite biosynthesis. In terms of biological role, short chain dehydrogenase; part of the gene cluster that mediates the biosynthesis of azaterrilone A and other azaphilones, a class of fungal metabolites characterized by a highly oxygenated pyrano-quinone bicyclic core and exhibiting a broad range of bioactivities. The first step of the pathway begins with the non-reducing polyketide synthase tazA that assembles one acetyl-CoA starter unit, five malonyl-CoA units, and catalyzes a series of Claisen condensations, methylation, PT-mediated cyclization, and finally releases the first hexaketide precursor through the R-domain. The tazA product then undergoes reduction on its terminal ketone and the following pyran-ring formation by yet undetermined enzyme(s). Dehydration and enoyl reduction, possibly involving the trans-enoyl reductase tazE leads to the next intermediate. TazD is predicted as an acetyltransferase and might catalyze the acetylation steps leading to the synthesis of azaterrilone A. Azaterrilone A is not the final product of the taz pathway and both the highly reducing polyketide synthase tazB and the dual enzyme tazHJ catalyze late steps of the pathway, leading to the production of the 2 final stereoisomers that contain additional polyketide modification whose structures have still to be determined. The protein is Short chain dehydrogenase tazN of Aspergillus terreus (strain NIH 2624 / FGSC A1156).